The primary structure comprises 89 residues: MAHKKGVGSSKNGRESHSKRLGVKIFGGEACKAGNIIIRQRGTEFHPGENIGMGKDHTLFALVDGTVKFKVGREDRRYVSIIPAEATEA.

It belongs to the bacterial ribosomal protein bL27 family.

This chain is Large ribosomal subunit protein bL27, found in Bacteroides thetaiotaomicron (strain ATCC 29148 / DSM 2079 / JCM 5827 / CCUG 10774 / NCTC 10582 / VPI-5482 / E50).